A 386-amino-acid polypeptide reads, in one-letter code: MFKRKGALKVAMVAGEASGDLLAAHLMDALRAHRSDIEFAGIGGPRMEARGFHSMVPQEKLAVRGYSEVLKSLPELLKIRRRLREQLLEERPDVFIGVDAPDFNLGLEAGLKKGGIPTVHYVSPSVWAWRPERVQKIGRAVNHVLCLFPMEPPLYRQAGVPVTYVGHPLASEIPLEPDREAMRDQLGLPQGVPVFTLMPGSRQSELEYMVPIYLDTARLLLRQYPEAQFLVPLATRATMDQFEQMLYRFKARDLPIRKLFGHAQMAMIASDVVLVTSGTATLEVALTKRPMVISYKLSALTYRLVKRKIKLPYVGLPNILCGRFVVPELLQKQATPQKLAEEMQRLYTDSAARADMEKAFTELHLALKQDTATRAARAVLEVARCH.

This sequence belongs to the LpxB family.

It carries out the reaction a lipid X + a UDP-2-N,3-O-bis[(3R)-3-hydroxyacyl]-alpha-D-glucosamine = a lipid A disaccharide + UDP + H(+). Its pathway is bacterial outer membrane biogenesis; LPS lipid A biosynthesis. Its function is as follows. Condensation of UDP-2,3-diacylglucosamine and 2,3-diacylglucosamine-1-phosphate to form lipid A disaccharide, a precursor of lipid A, a phosphorylated glycolipid that anchors the lipopolysaccharide to the outer membrane of the cell. This chain is Lipid-A-disaccharide synthase, found in Chromobacterium violaceum (strain ATCC 12472 / DSM 30191 / JCM 1249 / CCUG 213 / NBRC 12614 / NCIMB 9131 / NCTC 9757 / MK).